The chain runs to 460 residues: Cysteine--tRNA ligase (460 aa).

Cysteine 29 is a Zn(2+) binding site. The 'HIGH' region signature appears at 31–41 (MTIYDLCHIGH). Residues cysteine 213, histidine 238, and glutamate 242 each contribute to the Zn(2+) site. The 'KMSKS' region signature appears at 270–274 (KMSKS). Lysine 273 contributes to the ATP binding site.

The protein belongs to the class-I aminoacyl-tRNA synthetase family. Monomer. The cofactor is Zn(2+).

It localises to the cytoplasm. The catalysed reaction is tRNA(Cys) + L-cysteine + ATP = L-cysteinyl-tRNA(Cys) + AMP + diphosphate. The polypeptide is Cysteine--tRNA ligase (Verminephrobacter eiseniae (strain EF01-2)).